The chain runs to 249 residues: Cytokine-inducible SH2-containing protein (249 aa).

A disordered region spans residues 41–64 (AFPEEPAPTFAAPEPDGSAPQTRD). The SH2 domain occupies 84–165 (WYWGSITASE…PDVVSLIQHY (82 aa)). Positions 200 to 248 (KLLRPLGRRDSIPSLQHLCRLRINRCTTEVERLPLPRRMGDYLKQYPFQ) constitute an SOCS box domain.

The protein operates within protein modification; protein ubiquitination. In terms of biological role, SOCS family proteins form part of a classical negative feedback system that regulates cytokine signal transduction. CIS is involved in the negative regulation of cytokines that signal through the JAK-STAT5 pathway such as erythropoietin, prolactin and interleukin 3 (IL3) receptor. Inhibits STAT5 trans-activation by suppressing its tyrosine phosphorylation. May be a substrate-recognition component of a SCF-like ECS (Elongin BC-CUL2/5-SOCS-box protein) E3 ubiquitin-protein ligase complex which mediates the ubiquitination and subsequent proteasomal degradation of target proteins. The chain is Cytokine-inducible SH2-containing protein (CISH) from Gallus gallus (Chicken).